The sequence spans 192 residues: Outer-membrane lipoprotein LolB (192 aa).

Positions 1–17 are cleaved as a signal peptide; sequence MTYRTLCILAFTALISA. The N-palmitoyl cysteine moiety is linked to residue Cys18. The S-diacylglycerol cysteine moiety is linked to residue Cys18.

This sequence belongs to the LolB family. Monomer.

The protein resides in the cell outer membrane. Its function is as follows. Plays a critical role in the incorporation of lipoproteins in the outer membrane after they are released by the LolA protein. The chain is Outer-membrane lipoprotein LolB from Marinomonas sp. (strain MWYL1).